The following is a 597-amino-acid chain: Aspartate--tRNA(Asp/Asn) ligase (597 aa).

L-aspartate is bound at residue Glu-182. The segment at 206–209 (QLFK) is aspartate. Arg-228 contributes to the L-aspartate binding site. ATP is bound by residues 228–230 (RDE) and Gln-237. His-456 provides a ligand contact to L-aspartate. Glu-490 serves as a coordination point for ATP. Residue Arg-497 participates in L-aspartate binding. Position 542-545 (542-545 (GFDR)) interacts with ATP.

This sequence belongs to the class-II aminoacyl-tRNA synthetase family. Type 1 subfamily. Homodimer.

It is found in the cytoplasm. It catalyses the reaction tRNA(Asx) + L-aspartate + ATP = L-aspartyl-tRNA(Asx) + AMP + diphosphate. Aspartyl-tRNA synthetase with relaxed tRNA specificity since it is able to aspartylate not only its cognate tRNA(Asp) but also tRNA(Asn). Reaction proceeds in two steps: L-aspartate is first activated by ATP to form Asp-AMP and then transferred to the acceptor end of tRNA(Asp/Asn). This chain is Aspartate--tRNA(Asp/Asn) ligase, found in Desulfatibacillum aliphaticivorans.